The following is a 338-amino-acid chain: Large ribosomal subunit protein uL3 (338 aa).

The segment at 230-258 (HRKGHRRTGTIGPQAPAVMFTQPRPGQMG) is disordered.

Belongs to the universal ribosomal protein uL3 family. As to quaternary structure, part of the 50S ribosomal subunit. Forms a cluster with proteins L14 and L24e.

Functionally, one of the primary rRNA binding proteins, it binds directly near the 3'-end of the 23S rRNA, where it nucleates assembly of the 50S subunit. The sequence is that of Large ribosomal subunit protein uL3 from Pyrobaculum aerophilum (strain ATCC 51768 / DSM 7523 / JCM 9630 / CIP 104966 / NBRC 100827 / IM2).